A 365-amino-acid chain; its full sequence is Probable L-tyrosine/L-aspartate decarboxylase (365 aa).

The residue at position 225 (K225) is an N6-(pyridoxal phosphate)lysine.

This sequence belongs to the group II decarboxylase family. MfnA subfamily. Pyridoxal 5'-phosphate is required as a cofactor.

It carries out the reaction L-tyrosine + H(+) = tyramine + CO2. It catalyses the reaction L-aspartate + H(+) = beta-alanine + CO2. Its pathway is cofactor biosynthesis; methanofuran biosynthesis. It participates in cofactor biosynthesis; coenzyme A biosynthesis. Catalyzes the decarboxylation of L-tyrosine to produce tyramine for methanofuran biosynthesis. Can also catalyze the decarboxylation of L-aspartate to produce beta-alanine for coenzyme A (CoA) biosynthesis. This is Probable L-tyrosine/L-aspartate decarboxylase from Methanocorpusculum labreanum (strain ATCC 43576 / DSM 4855 / Z).